The sequence spans 275 residues: MEERKEEGEAEIQEHGPEHWFSKWERQCLAEAEQDEQLSPELQEEAAAAAQPEHKQQKLWHLFQNSATAVAQLYKDRVCQQPGLSLWVPFQNAATAVTNLYKESVDTHQRSFDIGIQIGYQRRNKDVLAWVKKRRRTIRREDLISFLCGKVPPPRNSRAPPRLTVVSPNRATSTETSSSVETDLQPFREAIALHGLSGAMASISVRSSTPGSPTHVSSGPNASRRRNGLHDVDLNTFITEEMALHLDNGGTRKRTSAQCGDVITDSPTHKRNRML.

Over residues 32–44 (AEQDEQLSPELQE) the composition is skewed to acidic residues. Disordered stretches follow at residues 32–51 (AEQD…AAAQ), 155–181 (RNSR…SSVE), 204–228 (SVRS…RRNG), and 250–275 (GTRK…NRML). A Phosphoserine modification is found at Ser167. A compositionally biased stretch (low complexity) spans 172–181 (TSTETSSSVE). Residues 204–221 (SVRSSTPGSPTHVSSGPN) show a composition bias toward polar residues. Ser212 bears the Phosphoserine mark.

Belongs to the HAPSTR1 family. As to quaternary structure, homooligomer. Heterooligomer with HAPSTR2; the interaction is direct and stabilizes HAPSTR1. Interacts with HUWE1. In terms of processing, ubiquitinated by HUWE1. Promotes HAPSTR1 degradation through polyubiquitination.

Its subcellular location is the nucleus. The protein resides in the cytoplasm. Its function is as follows. Acts as a central player within a network of stress response pathways promoting cellular adaptability. The E3 ligase HUWE1 assists HAPSTR1 in controlling stress signaling and in turn, HUWE1 feeds back to promote the degradation of HAPSTR1. HAPSTR1 represents a central coordination mechanism for stress response programs. Functions as a negative regulator of TP53/P53 in the cellular response to telomere erosion and probably also DNA damage. May attenuate p53/TP53 activation through the E3 ubiquitin ligase HUWE1. This is HUWE1-associated protein modifying stress responses from Mus musculus (Mouse).